Consider the following 331-residue polypeptide: 6-phosphogluconolactonase (331 aa).

It belongs to the cycloisomerase 2 family.

The enzyme catalyses 6-phospho-D-glucono-1,5-lactone + H2O = 6-phospho-D-gluconate + H(+). Its pathway is carbohydrate degradation; pentose phosphate pathway; D-ribulose 5-phosphate from D-glucose 6-phosphate (oxidative stage): step 2/3. In terms of biological role, catalyzes the hydrolysis of 6-phosphogluconolactone to 6-phosphogluconate. This Salmonella paratyphi A (strain ATCC 9150 / SARB42) protein is 6-phosphogluconolactonase.